The following is a 128-amino-acid chain: L-ectoine synthase (128 aa).

It belongs to the ectoine synthase family.

The catalysed reaction is (2S)-4-acetamido-2-aminobutanoate = L-ectoine + H2O. The protein operates within amine and polyamine biosynthesis; ectoine biosynthesis; L-ectoine from L-aspartate 4-semialdehyde: step 3/3. Catalyzes the circularization of gamma-N-acetyl-alpha,gamma-diaminobutyric acid (ADABA) to ectoine (1,4,5,6-tetrahydro-2-methyl-4-pyrimidine carboxylic acid), which is an excellent osmoprotectant. This is L-ectoine synthase from Aliivibrio fischeri (strain ATCC 700601 / ES114) (Vibrio fischeri).